We begin with the raw amino-acid sequence, 386 residues long: 1-deoxy-D-xylulose 5-phosphate reductoisomerase (386 aa).

The NADPH site is built by serine 10, glycine 11, serine 12, valine 13, asparagine 38, and asparagine 120. Residue lysine 121 participates in 1-deoxy-D-xylulose 5-phosphate binding. Residue glutamate 122 participates in NADPH binding. Aspartate 146 contributes to the Mn(2+) binding site. Positions 147, 148, 172, and 195 each coordinate 1-deoxy-D-xylulose 5-phosphate. Glutamate 148 is a binding site for Mn(2+). Glycine 201 is a binding site for NADPH. 1-deoxy-D-xylulose 5-phosphate contacts are provided by serine 208, asparagine 213, lysine 214, and glutamate 217. Glutamate 217 provides a ligand contact to Mn(2+).

The protein belongs to the DXR family. Requires Mg(2+) as cofactor. Mn(2+) serves as cofactor.

The enzyme catalyses 2-C-methyl-D-erythritol 4-phosphate + NADP(+) = 1-deoxy-D-xylulose 5-phosphate + NADPH + H(+). The protein operates within isoprenoid biosynthesis; isopentenyl diphosphate biosynthesis via DXP pathway; isopentenyl diphosphate from 1-deoxy-D-xylulose 5-phosphate: step 1/6. In terms of biological role, catalyzes the NADPH-dependent rearrangement and reduction of 1-deoxy-D-xylulose-5-phosphate (DXP) to 2-C-methyl-D-erythritol 4-phosphate (MEP). The polypeptide is 1-deoxy-D-xylulose 5-phosphate reductoisomerase (Leptospira biflexa serovar Patoc (strain Patoc 1 / Ames)).